The following is a 21-amino-acid chain: Venom peptide Ocy4 (21 aa).

Expressed by the venom gland.

The protein localises to the secreted. In Opisthacanthus cayaporum (South American scorpion), this protein is Venom peptide Ocy4.